The chain runs to 344 residues: tRNA N6-adenosine threonylcarbamoyltransferase (344 aa).

Fe cation contacts are provided by His112 and His116. Substrate is bound by residues 134 to 138 (LASGG), Asp167, Gly180, and Asn280. Residue Asp308 participates in Fe cation binding.

Belongs to the KAE1 / TsaD family. Fe(2+) serves as cofactor.

Its subcellular location is the cytoplasm. The catalysed reaction is L-threonylcarbamoyladenylate + adenosine(37) in tRNA = N(6)-L-threonylcarbamoyladenosine(37) in tRNA + AMP + H(+). In terms of biological role, required for the formation of a threonylcarbamoyl group on adenosine at position 37 (t(6)A37) in tRNAs that read codons beginning with adenine. Is involved in the transfer of the threonylcarbamoyl moiety of threonylcarbamoyl-AMP (TC-AMP) to the N6 group of A37, together with TsaE and TsaB. TsaD likely plays a direct catalytic role in this reaction. This Rickettsia peacockii (strain Rustic) protein is tRNA N6-adenosine threonylcarbamoyltransferase.